Consider the following 1574-residue polypeptide: Sterol 3-beta-glucosyltransferase (1574 aa).

Residues 37 to 48 (TFLNQNPASPNN) are compositionally biased toward polar residues. 2 disordered regions span residues 37 to 61 (TFLNQNPASPNNEEVPGNNEANKDE) and 102 to 170 (ASNA…HSKL). 2 stretches are compositionally biased toward basic and acidic residues: residues 107–121 (EAKDSKLNDNLRSSR) and 128–138 (PEYRREYKLDY). Residues 139 to 148 (DIDESEEDDI) are compositionally biased toward acidic residues. A compositionally biased stretch (basic and acidic residues) spans 149-170 (ESTRDENTLKPKTEDTSVHSKL). One can recognise a GRAM 1 domain in the interval 253-288 (DKLKRVFELNDDDYFYGNYNVWLVRDVLLQGHIYLT). Residues 323–471 (DVIQSGSLGM…WVNNIVKVVF (149 aa)) form the PH domain. Disordered regions lie at residues 389 to 413 (GRNDNASPRPDLHRNDSQEVSSGDE), 538 to 559 (RMKKELKNKTKKKMKKNSGNEP), 651 to 722 (ASHR…PVQG), and 774 to 806 (DALSPQIKSPQPLEAGPLNLTDPSEYEDNKKKN). Residues 692–701 (ITPSKIFSNK) show a composition bias toward polar residues. Positions 702 to 711 (SRTESEKSTP) are enriched in basic and acidic residues. The segment covering 712–722 (DRSQTTSPVQG) has biased composition (polar residues). In terms of domain architecture, GRAM 2 spans 854 to 920 (RHFQERFSFN…IDVDTCSKEK (67 aa)). The segment covering 964 to 976 (RESGNESSDDNKS) has biased composition (basic and acidic residues). The tract at residues 964–996 (RESGNESSDDNKSAQHGKSGCFQKTPSSAETTK) is disordered. Residues 985–996 (FQKTPSSAETTK) are compositionally biased toward polar residues. Residues S1057, R1058, D1060, N1333, I1364, H1366, H1379, S1382, G1383, T1384, D1403, and Q1404 each coordinate UDP-alpha-D-glucose. Positions 1505-1574 (DSDTYDADHD…DNTTVTDANK (70 aa)) are disordered. Over residues 1510–1533 (DADHDSDKESDHDQTYEQDNHSDY) the composition is skewed to basic and acidic residues. Residues 1563 to 1574 (GNDNTTVTDANK) are compositionally biased toward polar residues.

The protein belongs to the glycosyltransferase 28 family.

Its subcellular location is the cytoplasm. The protein localises to the membrane. The catalysed reaction is a sterol + UDP-alpha-D-glucose = a sterol 3-beta-D-glucoside + UDP + H(+). It carries out the reaction ergosterol + UDP-alpha-D-glucose = ergosteryl 3-beta-D-glucoside + UDP + H(+). Its function is as follows. Sterol glycosyltransferase responsible for the glycosylation of ergosterol to form ergosterol-glucoside. This chain is Sterol 3-beta-glucosyltransferase, found in Debaryomyces hansenii (strain ATCC 36239 / CBS 767 / BCRC 21394 / JCM 1990 / NBRC 0083 / IGC 2968) (Yeast).